A 723-amino-acid polypeptide reads, in one-letter code: Transmembrane channel-like protein 7 (723 aa).

A disordered region spans residues 1-21 (MSESSASALQLGRPSRQPAVH). At 1-168 (MSESSASALQ…GIQSYFSFLR (168 aa)) the chain is on the extracellular side. The N-linked (GlcNAc...) asparagine glycan is linked to N24. Residues 51–70 (RRRTTVHSRDKQSGTLLKST) form a disordered region. A glycan (N-linked (GlcNAc...) asparagine) is linked at N84. S89 bears the Phosphoserine mark. N96 is a glycosylation site (N-linked (GlcNAc...) asparagine). Residues 169–189 (FLVLLNLVIFLIIFMLVLLPI) traverse the membrane as a helical segment. Topologically, residues 190 to 219 (LLTKYKITNSSFVLIPFKDTDIQCTVYPVS) are cytoplasmic. A helical membrane pass occupies residues 220–240 (SSGLIYFYSYIIDLLSGTGFL). The Extracellular segment spans residues 241 to 263 (EETSLFYGHYTIDGVKFQNFTYD). N259 carries N-linked (GlcNAc...) asparagine glycosylation. Residues 264-284 (LPLAYLISTIAYLALSLLWIV) form a helical membrane-spanning segment. The Cytoplasmic segment spans residues 285–362 (KRSVEGFKIN…EETIRIYSLR (78 aa)). The helical transmembrane segment at 363 to 383 (LFLNCIVLAVLGACFYAIYVA) threads the bilayer. At 384–404 (TVFSQEHMKKEIDKMVFGENL) the chain is on the extracellular side. A helical membrane pass occupies residues 405–425 (LILYLPSIVITLANFITPMIF). At 426-494 (AKIIRYEDYS…PCWETQVGQE (69 aa)) the chain is on the cytoplasmic side. A helical transmembrane segment spans residues 495-515 (MYKLMIFDFIIILAVTLFVDF). At 516 to 555 (PRKLLVTYCSSWKLIQCWGQQEFAIPDNVLGIVYGQTICW) the chain is on the extracellular side. Residues 556–576 (IGAFFSPLLPAIATLKFIIIF) traverse the membrane as a helical segment. Over 577 to 601 (YVKEWSLLYTCRPSPRPFRASNSNF) the chain is Cytoplasmic. The chain crosses the membrane as a helical span at residues 602-622 (FFLLVLLIGLCLAIIPLTISI). The Extracellular portion of the chain corresponds to 623–665 (SRIPSSKACGPFTNFNTTWEVIPKTVSTFPSSLQSFIHGVTSE). Residue N638 is glycosylated (N-linked (GlcNAc...) asparagine). The helical transmembrane segment at 666–686 (AFAVPFFMIICLIMFYFIALA) threads the bilayer. The Cytoplasmic segment spans residues 687 to 723 (GAHKRVVIQLREQLSLESRDKRYLIQKLTEAQRDTRN).

The protein belongs to the TMC family. Interacts with PIEZO2; the interaction inhibits PIEZO2-conducted mechanically activated currents.

The protein resides in the membrane. Functionally, acts as an inhibitory modulator of PIEZO2 mechanosensitive channel in dorsal root ganglion (DRG) neurons through physical interactions or interference with the interaction between Piezo2 and the cytoskeleton. The polypeptide is Transmembrane channel-like protein 7 (TMC7) (Macaca fascicularis (Crab-eating macaque)).